Consider the following 427-residue polypeptide: Histidine--tRNA ligase (427 aa).

This sequence belongs to the class-II aminoacyl-tRNA synthetase family. As to quaternary structure, homodimer.

The protein localises to the cytoplasm. It carries out the reaction tRNA(His) + L-histidine + ATP = L-histidyl-tRNA(His) + AMP + diphosphate + H(+). The polypeptide is Histidine--tRNA ligase (Deinococcus radiodurans (strain ATCC 13939 / DSM 20539 / JCM 16871 / CCUG 27074 / LMG 4051 / NBRC 15346 / NCIMB 9279 / VKM B-1422 / R1)).